A 659-amino-acid polypeptide reads, in one-letter code: Putative oxidoreductase AegA (659 aa).

5 consecutive 4Fe-4S ferredoxin-type domains span residues 3-22 (RFIM…EIAC), 47-77 (HQQQ…SHVD), 78-107 (DSIQ…IVLT), 114-147 (VKAT…LVTD), and 218-252 (DQAQ…WIEL). [4Fe-4S] cluster contacts are provided by C12, C15, C18, C22, C56, C59, C64, C68, C87, C90, C93, C97, C121, C124, C133, C137, C227, C230, C236, and C240.

Requires [4Fe-4S] cluster as cofactor.

Functionally, involved in formate-dependent uric acid degradation under microaerobic and anaerobic conditions. May reduce the enzymes necessary for uric acid degradation. The chain is Putative oxidoreductase AegA from Escherichia coli (strain K12).